Reading from the N-terminus, the 482-residue chain is tRNA sulfurtransferase (482 aa).

Residues 58-160 enclose the THUMP domain; the sequence is VEALQELSRV…GNKAYLYSNV (103 aa). Residues 178-179, 203-204, R260, G282, and Q291 contribute to the ATP site; these read LF and HY. Residues C341 and C444 are joined by a disulfide bond. One can recognise a Rhodanese domain in the interval 400–482; sequence IPGDSIIIDV…RYRAGLEKTR (83 aa). C444 acts as the Cysteine persulfide intermediate in catalysis.

The protein belongs to the ThiI family.

The protein localises to the cytoplasm. The enzyme catalyses [ThiI sulfur-carrier protein]-S-sulfanyl-L-cysteine + a uridine in tRNA + 2 reduced [2Fe-2S]-[ferredoxin] + ATP + H(+) = [ThiI sulfur-carrier protein]-L-cysteine + a 4-thiouridine in tRNA + 2 oxidized [2Fe-2S]-[ferredoxin] + AMP + diphosphate. It catalyses the reaction [ThiS sulfur-carrier protein]-C-terminal Gly-Gly-AMP + S-sulfanyl-L-cysteinyl-[cysteine desulfurase] + AH2 = [ThiS sulfur-carrier protein]-C-terminal-Gly-aminoethanethioate + L-cysteinyl-[cysteine desulfurase] + A + AMP + 2 H(+). It participates in cofactor biosynthesis; thiamine diphosphate biosynthesis. Its function is as follows. Catalyzes the ATP-dependent transfer of a sulfur to tRNA to produce 4-thiouridine in position 8 of tRNAs, which functions as a near-UV photosensor. Also catalyzes the transfer of sulfur to the sulfur carrier protein ThiS, forming ThiS-thiocarboxylate. This is a step in the synthesis of thiazole, in the thiamine biosynthesis pathway. The sulfur is donated as persulfide by IscS. In Desulfurococcus amylolyticus (strain DSM 18924 / JCM 16383 / VKM B-2413 / 1221n) (Desulfurococcus kamchatkensis), this protein is tRNA sulfurtransferase.